Reading from the N-terminus, the 219-residue chain is Ribosomal RNA large subunit methyltransferase E (219 aa).

The S-adenosyl-L-methionine site is built by Gly-60, Trp-62, Asp-80, Asp-96, and Asp-120. Catalysis depends on Lys-160, which acts as the Proton acceptor.

It belongs to the class I-like SAM-binding methyltransferase superfamily. RNA methyltransferase RlmE family.

The protein resides in the cytoplasm. It carries out the reaction uridine(2552) in 23S rRNA + S-adenosyl-L-methionine = 2'-O-methyluridine(2552) in 23S rRNA + S-adenosyl-L-homocysteine + H(+). In terms of biological role, specifically methylates the uridine in position 2552 of 23S rRNA at the 2'-O position of the ribose in the fully assembled 50S ribosomal subunit. This is Ribosomal RNA large subunit methyltransferase E from Acidithiobacillus ferrooxidans (strain ATCC 23270 / DSM 14882 / CIP 104768 / NCIMB 8455) (Ferrobacillus ferrooxidans (strain ATCC 23270)).